The chain runs to 50 residues: Light-harvesting protein B-870 beta chain (50 aa).

The Cytoplasmic portion of the chain corresponds to 2 to 22; that stretch reads ADNTDLSFTGLTDEQAQELHS. A bacteriochlorophyll contacts are provided by H21 and H39. Residues 23-45 traverse the membrane as a helical segment; that stretch reads VYMSGLFLFAAVAVVAHLATYIW. Topologically, residues 46 to 50 are periplasmic; sequence RPWFG.

This sequence belongs to the antenna complex beta subunit family. In terms of assembly, the core complex is formed by different alpha and beta chains, binding bacteriochlorophyll molecules, and arranged most probably in tetrameric structures disposed around the reaction center. The non-pigmented gamma chains may constitute additional components.

It localises to the cell inner membrane. Antenna complexes are light-harvesting systems, which transfer the excitation energy to the reaction centers. The polypeptide is Light-harvesting protein B-870 beta chain (pufB) (Roseobacter denitrificans (strain ATCC 33942 / OCh 114) (Erythrobacter sp. (strain OCh 114))).